We begin with the raw amino-acid sequence, 419 residues long: 4-hydroxyphenylpyruvate dioxygenase (419 aa).

2 consecutive VOC domains span residues G41–R187 and A218–K376. H221, H304, and E387 together coordinate Fe cation.

The protein belongs to the 4HPPD family. The cofactor is Fe cation.

The enzyme catalyses 3-(4-hydroxyphenyl)pyruvate + O2 = homogentisate + CO2. It participates in amino-acid degradation; L-phenylalanine degradation; acetoacetate and fumarate from L-phenylalanine: step 3/6. In Zymoseptoria tritici (Speckled leaf blotch fungus), this protein is 4-hydroxyphenylpyruvate dioxygenase (HPPD).